Consider the following 226-residue polypeptide: MKMETFLVCLFHNADGLHQQIQEILYLLRMHIYETNLYLKQELSRLIYPNRQLSFVLLMPLSLLRNWDDIEYLTDVVDDKQTLHYAANLLTNYVLHLSMFQKLTKPYFLLAVKRVSEKLNKRQRHSFYEVLVTSETLNNYENLSKNILNTLMFAVRYVFKPTPNYSEILAELEKKNKIHHIIFNMVIADFAQIRKQQMDKHLCETNNELRQECKETIFDLKVVGNV.

The N-terminal stretch at 1–16 (MKMETFLVCLFHNADG) is a signal peptide. N-linked (GlcNAc...) asparagine; by host glycosylation is found at N142 and N164.

The protein belongs to the asfivirus I226R family.

Plays a role in the inhibition of host NF-kappa-B and IRF3 signaling pathways. Mechanistically, promotes the degradation of host IKBKG through enhancing its ubiquitination leading to inhibition of both pathways. This chain is Late protein I226R, found in Ornithodoros (relapsing fever ticks).